The following is a 342-amino-acid chain: Sesquiterpene synthase MBR_09977 (342 aa).

2 residues coordinate Mg(2+): Asp-91 and Asp-96. The DDXXXD motif motif lies at 91–96 (DDLFVD). Arg-184 contributes to the substrate binding site. Mg(2+)-binding residues include Asn-230, Ser-234, and Glu-238.

It belongs to the terpene synthase family. Mg(2+) serves as cofactor.

The catalysed reaction is (2E,6E)-farnesyl diphosphate + H2O = (+)-corvol ether B + diphosphate. It catalyses the reaction (2E,6E)-farnesyl diphosphate + H2O = (+)-corvol ether A + diphosphate. In terms of biological role, terpene synthase that catalyzes the conversion of (2E,6E)-farnesyl diphosphate (FPP) into sesquiterpenes which are important for fungi-environment interactions. Produces a mixture consisting of 8 sesquiterpenes including corvol ethers A and B, as well as traces of epizonarene, gamma-cadinene, delta-cadinene, alpha-cadinene, alpha-cadinol, and an unidentified sesquiterpene. The major product is corvol ether A. The protein is Sesquiterpene synthase MBR_09977 of Metarhizium brunneum (strain ARSEF 3297).